The chain runs to 462 residues: Tissue alpha-L-fucosidase (462 aa).

The N-terminal stretch at 1-28 (MWDLKSEWWAVGFGLLLLLAASAQAGGL) is a signal peptide. 3 N-linked (GlcNAc...) asparagine glycosylation sites follow: N237, N264, and N378.

This sequence belongs to the glycosyl hydrolase 29 family. As to quaternary structure, homotetramer.

It localises to the lysosome. It catalyses the reaction an alpha-L-fucoside + H2O = L-fucose + an alcohol. The enzyme catalyses a neolactoside IV(2)-alpha-Fuc-nLc4Cer(d18:1(4E)) + H2O = a neolactoside nLc4Cer(d18:1(4E)) + L-fucose. It carries out the reaction a neolactoside IV(2)-alpha-Fuc-nLc4Cer(d18:0) + H2O = a neolactoside nLc4Cer(d18:0) + L-fucose. Alpha-L-fucosidase is responsible for hydrolyzing the alpha-1,6-linked fucose joined to the reducing-end N-acetylglucosamine of the carbohydrate moieties of glycoproteins. This is Tissue alpha-L-fucosidase (Fuca1) from Rattus norvegicus (Rat).